A 988-amino-acid polypeptide reads, in one-letter code: Fanconi-associated nuclease 1 (988 aa).

The interval 1 to 39 (MESQTGRKSARRLSMTKKKSQSVCPIKERTSNGGAASIT) is disordered. The span at 8 to 20 (KSARRLSMTKKKS) shows a compositional bias: basic residues. The UBZ4-type zinc finger occupies 49–77 (KLACPLCGKLVPRYKINEHIDSQCQNFLV). The Zn(2+) site is built by C52, C55, H67, and C72. Disordered regions lie at residues 87 to 115 (TKAP…TSPF), 164 to 256 (TRVS…NTTE), and 269 to 307 (SSIE…TTQE). The segment covering 89 to 98 (APSNSALASN) has biased composition (polar residues). Basic and acidic residues-rich tracts occupy residues 99–111 (NERE…KDAD) and 167–182 (SDNE…RSQK). The segment covering 183-195 (ENCMNSLTFGSER) has biased composition (polar residues). Over residues 224–238 (SDSSISSDVHTSSSS) the composition is skewed to low complexity. The segment covering 272–283 (ERGDESKVKSDQ) has biased composition (basic and acidic residues). Polar residues predominate over residues 284–303 (TEASSSAYDVPTSKSPIKSK). The stretch at 636-663 (SRGVEILQRLKRYEDAVEQLRNLLSQSV) forms a coiled coil. Mn(2+) is bound by residues E805, D931, E946, and V947. Residues 866-978 (VETLQDLIAD…GADVEVCHVT (113 aa)) enclose the VRR-NUC domain.

It belongs to the FAN1 family. Interacts with fancd2 (when monoubiquitinated). Mn(2+) serves as cofactor. The cofactor is Mg(2+).

It is found in the nucleus. The catalysed reaction is Hydrolytically removes 5'-nucleotides successively from the 3'-hydroxy termini of 3'-hydroxy-terminated oligonucleotides.. Its function is as follows. Nuclease required for the repair of DNA interstrand cross-links (ICL) recruited at sites of DNA damage by monoubiquitinated FANCD2. Specifically involved in repair of ICL-induced DNA breaks by being required for efficient homologous recombination, probably in the resolution of homologous recombination intermediates. Acts as a 5'-3' exonuclease that anchors at a cut end of DNA and cleaves DNA successively at every third nucleotide, allowing to excise an ICL from one strand through flanking incisions. Probably keeps excising with 3'-flap annealing until it reaches and unhooks the ICL. Acts at sites that have a 5'-terminal phosphate anchor at a nick or a 1- or 2-nucleotide flap and is augmented by a 3' flap. Also has endonuclease activity toward 5'-flaps. In Danio rerio (Zebrafish), this protein is Fanconi-associated nuclease 1 (fan1).